A 348-amino-acid chain; its full sequence is Fructose-1,6-bisphosphatase class 1 (348 aa).

Residues Glu92, Asp111, Leu113, and Asp114 each coordinate Mg(2+). Residues 114-117 (DGSS) and Asn204 each bind substrate. Residue Glu276 coordinates Mg(2+).

The protein belongs to the FBPase class 1 family. In terms of assembly, homotetramer. Mg(2+) serves as cofactor.

Its subcellular location is the cytoplasm. It carries out the reaction beta-D-fructose 1,6-bisphosphate + H2O = beta-D-fructose 6-phosphate + phosphate. The protein operates within carbohydrate biosynthesis; gluconeogenesis. The sequence is that of Fructose-1,6-bisphosphatase class 1 from Methylorubrum extorquens (strain CM4 / NCIMB 13688) (Methylobacterium extorquens).